Here is a 224-residue protein sequence, read N- to C-terminus: Mammalian ependymin-related protein 1 (224 aa).

The N-terminal stretch at 1-37 (MPARAPRRLVQGPRGTWLLGSLWVWVLCGLGMAGSLG) is a signal peptide. Cystine bridges form between C42–C172, C88–C222, and C113–C210. N-linked (GlcNAc...) asparagine glycans are attached at residues N130 and N182.

Belongs to the ependymin family. As to quaternary structure, homodimer. In terms of processing, N-glycosylated; the glycan contains mannose-6-phosphate moieties. Detected in brain, small intestine and in soleus, extensor digitorum longus and white gastrocnemius (at protein level). Detected in brain and skeletal muscle, and at lower leavels in heart.

It localises to the lysosome lumen. It is found in the secreted. Binds anionic lipids and gangliosides at acidic pH. The sequence is that of Mammalian ependymin-related protein 1 (Epdr1) from Mus musculus (Mouse).